The chain runs to 149 residues: Large ribosomal subunit protein uL13 (149 aa).

The protein belongs to the universal ribosomal protein uL13 family. As to quaternary structure, part of the 50S ribosomal subunit.

This protein is one of the early assembly proteins of the 50S ribosomal subunit, although it is not seen to bind rRNA by itself. It is important during the early stages of 50S assembly. The chain is Large ribosomal subunit protein uL13 from Chlorobium limicola (strain DSM 245 / NBRC 103803 / 6330).